Consider the following 518-residue polypeptide: Cytochrome P450 3A27 (518 aa).

Cys-447 serves as a coordination point for heme.

The protein belongs to the cytochrome P450 family. It depends on heme as a cofactor.

It is found in the endoplasmic reticulum membrane. It localises to the microsome membrane. The enzyme catalyses an organic molecule + reduced [NADPH--hemoprotein reductase] + O2 = an alcohol + oxidized [NADPH--hemoprotein reductase] + H2O + H(+). Functionally, cytochromes P450 are a group of heme-thiolate monooxygenases. In liver microsomes, this enzyme is involved in an NADPH-dependent electron transport pathway. It oxidizes a variety of structurally unrelated compounds, including steroids, fatty acids, and xenobiotics. This chain is Cytochrome P450 3A27 (cyp3a27), found in Oncorhynchus mykiss (Rainbow trout).